The sequence spans 151 residues: Ribosome maturation factor RimP (151 aa).

Belongs to the RimP family.

The protein localises to the cytoplasm. Functionally, required for maturation of 30S ribosomal subunits. The protein is Ribosome maturation factor RimP of Shewanella sp. (strain ANA-3).